Here is a 508-residue protein sequence, read N- to C-terminus: Flagellin (508 aa).

This sequence belongs to the bacterial flagellin family.

The protein localises to the secreted. It is found in the bacterial flagellum. Flagellin is the subunit protein which polymerizes to form the filaments of bacterial flagella. The sequence is that of Flagellin (fliC) from Salmonella berta.